The chain runs to 141 residues: Heavy metal-associated isoprenylated plant protein 29 (141 aa).

The region spanning 1–59 is the HMA domain; it reads MEVPMDCPGCENKVRKALEKMNGVHDVQIDIKQQRVTVTGSAEQKKVLKVARNVTKRDI. Residues Cys-7 and Cys-10 each contribute to the a metal cation site. Cysteine methyl ester is present on Cys-138. The S-farnesyl cysteine moiety is linked to residue Cys-138. The propeptide at 139 to 141 is removed in mature form; the sequence is SIM.

The protein belongs to the HIPP family.

Functionally, heavy-metal-binding protein. The chain is Heavy metal-associated isoprenylated plant protein 29 from Arabidopsis thaliana (Mouse-ear cress).